Here is a 406-residue protein sequence, read N- to C-terminus: High mobility group nucleosome-binding domain-containing protein 5 (406 aa).

A disordered region spans residues 1–406 (MPKRKAAGDV…GEKEEPLSIV (406 aa)). Threonine 29 carries the phosphothreonine modification. Residues 35–44 (KRASTSRKTK) are compositionally biased toward basic residues. 5 stretches are compositionally biased toward basic and acidic residues: residues 63–72 (TKPEDVKDEC), 92–101 (MEAEEVKEQI), 110–126 (GEKK…DELK), 136–159 (EDGK…EGLN), and 166–187 (KSED…KGED). Residue lysine 64 forms a Glycyl lysine isopeptide (Lys-Gly) (interchain with G-Cter in SUMO2) linkage. Lysine 98 participates in a covalent cross-link: Glycyl lysine isopeptide (Lys-Gly) (interchain with G-Cter in SUMO1); alternate. A Glycyl lysine isopeptide (Lys-Gly) (interchain with G-Cter in SUMO2); alternate cross-link involves residue lysine 98. Lysine 121 participates in a covalent cross-link: Glycyl lysine isopeptide (Lys-Gly) (interchain with G-Cter in SUMO2). Residues 188–200 (GKEEGDEKEEEKD) are compositionally biased toward acidic residues. Basic and acidic residues-rich tracts occupy residues 201 to 239 (DKEG…KEGQ), 246 to 266 (EDLH…KEGQ), 272 to 284 (KEIH…KEGQ), and 290 to 311 (KEYL…KEGQ). Positions 312-325 (PEEDGKEDQPEEDG) are enriched in acidic residues. Residues 326–365 (KEGQCKEDGKEGHHEEGGKEDLHEEDGKEKDGGKEDRKEE) are compositionally biased toward basic and acidic residues. Residues 366 to 376 (GEQEVAVDEGS) show a composition bias toward acidic residues. Residues 377-406 (DENKVEAEEEGAENKDFKQDGEKEEPLSIV) show a composition bias toward basic and acidic residues.

Belongs to the HMGN family. As to expression, expressed in liver, spleen, lung, heart, kidney, muscle and brain (at protein level). Widely expressed with highest levels in submaxillary gland, thymus, kidney and liver and lowest levels in brain, lung, pancreas and eye.

It localises to the nucleus. In terms of biological role, preferentially binds to euchromatin and modulates cellular transcription by counteracting linker histone-mediated chromatin compaction. This Mus musculus (Mouse) protein is High mobility group nucleosome-binding domain-containing protein 5 (Hmgn5).